The sequence spans 193 residues: Glycerol-3-phosphate acyltransferase (193 aa).

4 helical membrane passes run 2 to 22, 76 to 96, 112 to 132, and 152 to 172; these read LIALLIILAYVIGSIPSGLIV, VPIHPLLAGVAAVIGHVFPVF, LLFYAPLLFVTMVAVFFVFLF, and CLFVKDPYLLVVVTLLTAFVI.

It belongs to the PlsY family. As to quaternary structure, probably interacts with PlsX.

The protein resides in the cell membrane. The catalysed reaction is an acyl phosphate + sn-glycerol 3-phosphate = a 1-acyl-sn-glycero-3-phosphate + phosphate. The protein operates within lipid metabolism; phospholipid metabolism. Catalyzes the transfer of an acyl group from acyl-phosphate (acyl-PO(4)) to glycerol-3-phosphate (G3P) to form lysophosphatidic acid (LPA). This enzyme utilizes acyl-phosphate as fatty acyl donor, but not acyl-CoA or acyl-ACP. The chain is Glycerol-3-phosphate acyltransferase from Bacillus velezensis (strain DSM 23117 / BGSC 10A6 / LMG 26770 / FZB42) (Bacillus amyloliquefaciens subsp. plantarum).